The following is a 2768-amino-acid chain: Thyroglobulin (2768 aa).

The signal sequence occupies residues 1–19 (MALVLEIFTLLASICWVSA). Tyr24 is modified (iodotyrosine; alternate). Residue Tyr24 is modified to Sulfotyrosine; alternate. Residue Tyr24 is modified to Thyroxine; alternate. A Triiodothyronine; alternate modification is found at Tyr24. 4 consecutive Thyroglobulin type-1 domains span residues 31-92 (LRPC…PVAC), 93-160 (LSFC…PKRC), 161-297 (PRSC…RFRC), and 298-358 (PTKC…PPSC). Cystine bridges form between Cys34-Cys52, Cys63-Cys70, Cys72-Cys92, Cys96-Cys120, Cys131-Cys138, Cys140-Cys160, Cys164-Cys183, Cys194-Cys235, Cys237-Cys297, Cys301-Cys319, Cys330-Cys336, Cys338-Cys358, Cys364-Cys620, Cys408-Cys608, Cys631-Cys636, Cys638-Cys658, Cys662-Cys687, and Cys698-Cys703. Asn76 carries an N-linked (GlcNAc...) asparagine glycan. Position 108 is an iodotyrosine (Tyr108). An N-linked (GlcNAc...) asparagine glycan is attached at Asn110. Residue Tyr149 is modified to Iodotyrosine; alternate. A Diiodotyrosine; alternate modification is found at Tyr149. Residue Asn198 is glycosylated (N-linked (GlcNAc...) asparagine). Residues Tyr234 and Tyr258 each carry the iodotyrosine modification. Residues Asn484 and Asn529 are each glycosylated (N-linked (GlcNAc...) asparagine). The segment at 521–545 (PLSVGLDSNSSTGTPEAAKKDGTMN) is disordered. Thyroglobulin type-1 domains are found at residues 605–658 (SQTC…QPRC), 659–726 (PTDC…PKKC), 727–921 (PTPC…LPTC), 922–1073 (PGSC…IPQC), 1074–1145 (PTTC…SAQC), and 1146–1210 (PSLC…QPAC). Tyr704 carries the iodotyrosine; alternate modification. Thyroxine; alternate is present on Tyr704. The residue at position 704 (Tyr704) is a Triiodothyronine; alternate. Tyr704 is subject to Diiodotyrosine; alternate. 16 disulfides stabilise this stretch: Cys705–Cys726, Cys730–Cys763, Cys774–Cys898, Cys900–Cys921, Cys925–Cys1031, Cys1042–Cys1049, Cys1051–Cys1073, Cys1077–Cys1108, Cys1126–Cys1145, Cys1149–Cys1169, Cys1181–Cys1188, Cys1190–Cys1210, Cys1215–Cys1264, Cys1231–Cys1245, Cys1306–Cys1356, and Cys1331–Cys1347. An N-linked (GlcNAc...) asparagine glycan is attached at Asn748. Residue Tyr785 is modified to Iodotyrosine. Asn816 carries N-linked (GlcNAc...) asparagine glycosylation. Residue Tyr866 is modified to Iodotyrosine; alternate. Position 866 is a diiodotyrosine; alternate (Tyr866). Tyr883 is modified (diiodotyrosine). An N-linked (GlcNAc...) asparagine glycan is attached at Asn947. Residue Tyr992 is modified to Iodotyrosine; alternate. Tyr992 is subject to Diiodotyrosine; alternate. Asn1220 is a glycosylation site (N-linked (GlcNAc...) asparagine). Iodotyrosine is present on Tyr1310. Thyroxine is present on Tyr1310. Residues Asn1348, Asn1349, and Asn1365 are each glycosylated (N-linked (GlcNAc...) asparagine). Disulfide bonds link Cys1440–Cys1459, Cys1462–Cys1473, Cys1476–Cys1490, Cys1493–Cys1510, Cys1514–Cys1523, Cys1543–Cys1565, Cys1603–Cys1627, Cys1607–Cys1613, and Cys1639–Cys1662. 3 Type II repeats span residues 1456–1469 (GLGC…SYSQ), 1470–1486 (DEEC…EQAG), and 1487–1503 (SLAC…ISAG). Residue Tyr1467 is modified to Iodotyrosine; alternate. Tyr1467 carries the post-translational modification Diiodotyrosine; alternate. Residues 1511-1565 (VTDCQRNEAGLQCDQNGQYRASQKDRGSGKAFCVDGEGRRLPWWETEAPLEDSQC) enclose the Thyroglobulin type-1 11 domain. One copy of the Type IIIA repeat lies at 1603–1723 (CLTDCTEDEA…GANLTDAHLF (121 aa)). N-linked (GlcNAc...) asparagine glycosylation occurs at Asn1716. Disulfide bonds link Cys1724–Cys1749, Cys1728–Cys1734, Cys1733–Cys1835, and Cys1760–Cys1777. The Type IIIB repeat unit spans residues 1724-1892 (CLLACDRDLC…LFSAQQANLW (169 aa)). Residues Asn1774 and Asn1869 are each glycosylated (N-linked (GlcNAc...) asparagine). 7 cysteine pairs are disulfide-bonded: Cys1893–Cys1919, Cys1897–Cys1904, Cys1928–Cys1939, Cys1996–Cys2024, Cys2000–Cys2006, Cys2005–Cys2076, and Cys2035–Cys2048. One copy of the Type IIIA repeat lies at 1893–1995 (CLSRCVQEHS…EKSISNGFFE (103 aa)). The stretch at 1996 to 2129 (CERRCDADPC…TSNFSAVRDL (134 aa)) is one Type IIIB repeat. Asn2013 is a glycosylation site (N-linked (GlcNAc...) asparagine). The N-linked (GlcNAc...) asparagine glycan is linked to Asn2122. 3 disulfides stabilise this stretch: Cys2130–Cys2154, Cys2134–Cys2140, and Cys2163–Cys2172. A Type IIIA repeat occupies 2130–2187 (CLSECSQHEACLITTLQTQPGAVRCMFYADTQSCTHSLQGQNCRLLLREEATHIYRKP). At Tyr2184 the chain carries Iodotyrosine. The segment at 2188–2768 (GISLLSYEAS…QEPGSKTYSK (581 aa)) is cholinesterase-like (ChEL). Asn2250 carries an N-linked (GlcNAc...) asparagine glycan. Cysteines 2264 and 2281 form a disulfide. N-linked (GlcNAc...) asparagine glycosylation is present at Asn2295. Residues Cys2442 and Cys2453 are joined by a disulfide bond. Tyr2540 carries the iodotyrosine modification. Iodotyrosine; alternate is present on Tyr2573. At Tyr2573 the chain carries Thyroxine; alternate. Triiodothyronine; alternate is present on Tyr2573. A Diiodotyrosine; alternate modification is found at Tyr2573. An N-linked (GlcNAc...) asparagine glycan is attached at Asn2582. 2 positions are modified to iodotyrosine: Tyr2587 and Tyr2617. The cysteines at positions 2591 and 2715 are disulfide-linked. At Tyr2697 the chain carries Diiodotyrosine. The disordered stretch occupies residues 2727–2768 (TSADGAKGGQSAESEEEELTAGSGLREDLLSLQEPGSKTYSK). An O-linked (Xyl...) (chondroitin sulfate) serine glycan is attached at Ser2749. An Iodotyrosine; alternate modification is found at Tyr2766. Tyr2766 carries the post-translational modification Thyroxine; alternate. Tyr2766 carries the triiodothyronine; alternate modification. Tyr2766 is modified (diiodotyrosine; alternate).

Belongs to the type-B carboxylesterase/lipase family. In terms of assembly, monomer. Homodimer (via ChEL region); occurs in the endoplasmic reticulum and is required for export to the Golgi apparatus. Homooligomer; disulfide-linked; stored in this form in the thyroid follicle lumen. Post-translationally, iodinated on tyrosine residues by TPO. There are 4 pairs of iodinated tyrosines used for coupling: acceptor Tyr-24 is coupled to donor Tyr-149 or Tyr-234, acceptor Tyr-2573 is coupled to donor Tyr-2540, acceptor Tyr-2766 in monomer 1 is coupled to donor Tyr-2766 in monomer 2 and acceptor Tyr-1310 in monomer 1 is coupled to donor Tyr-108 in monomer 2. Sulfated tyrosines are desulfated during iodination. In terms of processing, undergoes sequential proteolysis by cathepsins to release thyroxine (T4) and triiodothyronine (T3) hormones. In the thyroid follicle lumen, cross-linked TG (storage form) is solubilized by limited proteolysis mediated by cathepsins CTSB and/or CTSL. Partially cleaved TG is further processed by CTSK/cathepsin K and/or CTSL resulting in the release of T4. Following endocytosis, further processing occurs leading to the release of T3 and more T4 hormones. In terms of tissue distribution, specifically expressed in the thyroid gland.

The protein resides in the secreted. Functionally, acts as a substrate for the production of iodinated thyroid hormones thyroxine (T4) and triiodothyronine (T3). The synthesis of T3 and T4 involves iodination of selected tyrosine residues of TG/thyroglobulin followed by their oxidative coupling in the thyroid follicle lumen. Following TG re-internalization and lysosomal-mediated proteolysis, T3 and T4 are released from the polypeptide backbone leading to their secretion into the bloodstream. One dimer produces 7 thyroid hormone molecules. The chain is Thyroglobulin from Homo sapiens (Human).